We begin with the raw amino-acid sequence, 159 residues long: MINYLKSFFLYEIVRGMALTLKYFFKPKVTINYPYEKSPVSPRFKGEHALRRYENGEERCIACKLCEAICPAQAIVIEADEREDGSRRTTRYDIDMTKCIYCGLCQAACPVDAIVEGPNFEFASLTHTALIYDKERLLQNGDRWEQALASKLHKDYEYR.

4Fe-4S ferredoxin-type domains lie at 51-80 (RRYENGEERCIACKLCEAICPAQAIVIEAD) and 90-119 (TRYDIDMTKCIYCGLCQAACPVDAIVEGPN). Residues cysteine 60, cysteine 63, cysteine 66, cysteine 70, cysteine 99, cysteine 102, cysteine 105, and cysteine 109 each contribute to the [4Fe-4S] cluster site.

The protein belongs to the complex I 23 kDa subunit family. In terms of assembly, NDH-1 is composed of 14 different subunits. Subunits NuoA, H, J, K, L, M, N constitute the membrane sector of the complex. It depends on [4Fe-4S] cluster as a cofactor.

The protein localises to the cell inner membrane. It catalyses the reaction a quinone + NADH + 5 H(+)(in) = a quinol + NAD(+) + 4 H(+)(out). Its function is as follows. NDH-1 shuttles electrons from NADH, via FMN and iron-sulfur (Fe-S) centers, to quinones in the respiratory chain. The immediate electron acceptor for the enzyme in this species is believed to be ubiquinone. Couples the redox reaction to proton translocation (for every two electrons transferred, four hydrogen ions are translocated across the cytoplasmic membrane), and thus conserves the redox energy in a proton gradient. The chain is NADH-quinone oxidoreductase subunit I from Rickettsia massiliae (strain Mtu5).